A 214-amino-acid chain; its full sequence is Ribonuclease HII (214 aa).

Residues 26 to 214 form the RNase H type-2 domain; that stretch reads EIVCGVDEAG…PVREAFDLIR (189 aa). Aspartate 32, glutamate 33, and aspartate 124 together coordinate a divalent metal cation.

It belongs to the RNase HII family. Mn(2+) serves as cofactor. Requires Mg(2+) as cofactor.

The protein localises to the cytoplasm. The enzyme catalyses Endonucleolytic cleavage to 5'-phosphomonoester.. In terms of biological role, endonuclease that specifically degrades the RNA of RNA-DNA hybrids. This chain is Ribonuclease HII, found in Burkholderia pseudomallei (strain 1710b).